The primary structure comprises 938 residues: Isoleucine--tRNA ligase (938 aa).

The short motif at 58 to 68 (PYANGNIHIGH) is the 'HIGH' region element. E563 is an L-isoleucyl-5'-AMP binding site. Positions 604 to 608 (KMSKS) match the 'KMSKS' region motif. Residue K607 coordinates ATP. Zn(2+) contacts are provided by C903, C906, C921, and C924.

It belongs to the class-I aminoacyl-tRNA synthetase family. IleS type 1 subfamily. Monomer. Zn(2+) is required as a cofactor.

It localises to the cytoplasm. The enzyme catalyses tRNA(Ile) + L-isoleucine + ATP = L-isoleucyl-tRNA(Ile) + AMP + diphosphate. Functionally, catalyzes the attachment of isoleucine to tRNA(Ile). As IleRS can inadvertently accommodate and process structurally similar amino acids such as valine, to avoid such errors it has two additional distinct tRNA(Ile)-dependent editing activities. One activity is designated as 'pretransfer' editing and involves the hydrolysis of activated Val-AMP. The other activity is designated 'posttransfer' editing and involves deacylation of mischarged Val-tRNA(Ile). The sequence is that of Isoleucine--tRNA ligase from Buchnera aphidicola subsp. Schizaphis graminum (strain Sg).